The sequence spans 944 residues: Serine/threonine-protein kinase ATG1 (944 aa).

The 304-residue stretch at 24 to 327 (FNIGSEIGKG…FENFFTHQVV (304 aa)) folds into the Protein kinase domain. Residues 30–38 (IGKGSFAQV) and Lys-53 each bind ATP. Asp-167 (proton acceptor) is an active-site residue. A disordered region spans residues 344–423 (RQESRDPRSA…NSPREGGEGL (80 aa)). A compositionally biased stretch (low complexity) spans 356 to 367 (SGSPSLSSRSPR). The LIR signature appears at 428 to 431 (PVAQ). Disordered stretches follow at residues 443–475 (YDSVTGRNRASPPTSLLDQVRRNRALSNPPITE), 512–572 (LGDA…GSAS), 777–801 (QLPDDHPSHPSNHGTESIASSAGSP), 860–895 (EGSGSETRRLSTGKEAEREAVKEVSGGELDSDEEAH), and 925–944 (AVRRRSGDMTPRSVPSHASS). Polar residues-rich tracts occupy residues 447–459 (TGRNRASPPTSLL) and 516–549 (SQRSGPITRRYTQQGAPTSTTGAISTPYSRNALA). Over residues 563-572 (SLSASPGSAS) the composition is skewed to low complexity. Over residues 785–801 (HPSNHGTESIASSAGSP) the composition is skewed to polar residues. Over residues 865–881 (ETRRLSTGKEAEREAVK) the composition is skewed to basic and acidic residues. Residues 924–930 (QAVRRRS) form a required for Cvt trafficking region.

The protein belongs to the protein kinase superfamily. Ser/Thr protein kinase family. APG1/unc-51/ULK1 subfamily. As to quaternary structure, homodimer. Dimerization requires the presence of ATG13. Forms a ternary complex with ATG13 and ATG17.

The protein localises to the cytoplasm. It localises to the preautophagosomal structure membrane. It carries out the reaction L-seryl-[protein] + ATP = O-phospho-L-seryl-[protein] + ADP + H(+). The enzyme catalyses L-threonyl-[protein] + ATP = O-phospho-L-threonyl-[protein] + ADP + H(+). Serine/threonine protein kinase involved in the cytoplasm to vacuole transport (Cvt) and found to be essential in autophagy, where it is required for the formation of autophagosomes. Involved in the clearance of protein aggregates which cannot be efficiently cleared by the proteasome. Required for selective autophagic degradation of the nucleus (nucleophagy) as well as for mitophagy which contributes to regulate mitochondrial quantity and quality by eliminating the mitochondria to a basal level to fulfill cellular energy requirements and preventing excess ROS production. Also involved in endoplasmic reticulum-specific autophagic process, in selective removal of ER-associated degradation (ERAD) substrates. Plays a key role in ATG9 and ATG23 cycling through the pre-autophagosomal structure and is necessary to promote ATG18 binding to ATG9 through phosphorylation of ATG9. Catalyzes phosphorylation of ATG4, decreasing the interaction between ATG4 and ATG8 and impairing deconjugation of PE-conjugated forms of ATG8. Autophagy is required for proper vegetative growth, asexual/sexual reproduction, and full virulence. Autophagy is particularly involved in the biosynthesis of deoxynivalenol (DON), an important virulence determinant. In Gibberella zeae (strain ATCC MYA-4620 / CBS 123657 / FGSC 9075 / NRRL 31084 / PH-1) (Wheat head blight fungus), this protein is Serine/threonine-protein kinase ATG1.